The sequence spans 120 residues: Large ribosomal subunit protein uL18 (120 aa).

This sequence belongs to the universal ribosomal protein uL18 family. Part of the 50S ribosomal subunit; part of the 5S rRNA/L5/L18/L25 subcomplex. Contacts the 5S and 23S rRNAs.

Its function is as follows. This is one of the proteins that bind and probably mediate the attachment of the 5S RNA into the large ribosomal subunit, where it forms part of the central protuberance. The polypeptide is Large ribosomal subunit protein uL18 (Rippkaea orientalis (strain PCC 8801 / RF-1) (Cyanothece sp. (strain PCC 8801))).